The following is a 320-amino-acid chain: Cytosolic Fe-S cluster assembly factor NUBP1 (320 aa).

An N-acetylmethionine modification is found at M1. Positions 8, 22, 25, and 31 each coordinate [4Fe-4S] cluster. Residue 62–69 participates in ATP binding; it reads GKGGVGKS. 2 residues coordinate [4Fe-4S] cluster: C235 and C238. Position 319 is a phosphoserine (S319).

This sequence belongs to the Mrp/NBP35 ATP-binding proteins family. NUBP1/NBP35 subfamily. As to quaternary structure, heterotetramer of 2 NUBP1 and 2 NUBP2 chains. Interacts with KIFC1. Interacts with the BBS/CCT complex subunit CCT1. [4Fe-4S] cluster is required as a cofactor.

It is found in the cytoplasm. The protein localises to the nucleus. The protein resides in the cell projection. It localises to the cytoskeleton. Its subcellular location is the cilium axoneme. It is found in the cilium basal body. The protein localises to the microtubule organizing center. The protein resides in the centrosome. It localises to the centriole. Its function is as follows. Component of the cytosolic iron-sulfur (Fe/S) protein assembly (CIA) machinery. Required for maturation of extramitochondrial Fe-S proteins. The NUBP1-NUBP2 heterotetramer forms a Fe-S scaffold complex, mediating the de novo assembly of an Fe-S cluster and its transfer to target apoproteins. Implicated in the regulation of centrosome duplication. Negatively regulates cilium formation and structure. This chain is Cytosolic Fe-S cluster assembly factor NUBP1, found in Rattus norvegicus (Rat).